Here is a 221-residue protein sequence, read N- to C-terminus: GTP-binding nuclear protein Ran-1 (221 aa).

Residues 10 to 174 (DYPSFKLVIV…LYLARKLAGD (165 aa)) form the Small GTPase Ran-type domain. 21 to 28 (DGGTGKTT) serves as a coordination point for GTP. Residues 40–48 (KKYEPTIGV) are switch-I. GTP contacts are provided by residues glycine 71, 125–128 (NKVD), and 153–155 (SAK). Residues 71 to 87 (GQEKFGGLRDGYYIHGQ) are switch-II.

The protein belongs to the small GTPase superfamily. Ran family. As to quaternary structure, found in a nuclear export complex with RanGTP, exportin and pre-miRNA. Interacts with RANBP1A and RANBP1B. Interacts with TRN1. Interacts with ATX1. Interacts with KPNB1. Binds to XPO1. Interacts with MOS14. Binds to NTF2B.

The protein resides in the nucleus. Its function is as follows. GTP-binding protein involved in nucleocytoplasmic transport. Required for the import of protein into the nucleus and also for RNA export. Involved in chromatin condensation and control of cell cycle. This chain is GTP-binding nuclear protein Ran-1 (RAN1), found in Arabidopsis thaliana (Mouse-ear cress).